The sequence spans 296 residues: uncharacterized protein (296 aa).

Positions 129 to 170 (VKELKDLIRTVADEHMKMKREHEAAMKELTLLINNQKQQQQQ) form a coiled coil. The tract at residues 165–187 (KQQQQQPVPMPRNSTATRPKNLA) is disordered.

This is an uncharacterized protein from Ostreid herpesvirus 1 (isolate France) (OsHV-1).